Reading from the N-terminus, the 173-residue chain is Archaemetzincin (173 aa).

H130 is a Zn(2+) binding site. The active-site Proton acceptor is the E131. Zn(2+)-binding residues include H134, H140, C141, C146, C165, and C168.

Belongs to the peptidase M54 family. Monomer. Requires Zn(2+) as cofactor.

Probable zinc metalloprotease whose natural substrate is unknown. The polypeptide is Archaemetzincin (Haloarcula marismortui (strain ATCC 43049 / DSM 3752 / JCM 8966 / VKM B-1809) (Halobacterium marismortui)).